The sequence spans 243 residues: Carboxy-S-adenosyl-L-methionine synthase (243 aa).

S-adenosyl-L-methionine is bound by residues Tyr-40, 65 to 67 (GCS), 90 to 91 (DN), 118 to 119 (DI), Asn-133, and Arg-200.

It belongs to the class I-like SAM-binding methyltransferase superfamily. Cx-SAM synthase family. Homodimer.

It carries out the reaction prephenate + S-adenosyl-L-methionine = carboxy-S-adenosyl-L-methionine + 3-phenylpyruvate + H2O. In terms of biological role, catalyzes the conversion of S-adenosyl-L-methionine (SAM) to carboxy-S-adenosyl-L-methionine (Cx-SAM). The protein is Carboxy-S-adenosyl-L-methionine synthase of Shewanella putrefaciens (strain CN-32 / ATCC BAA-453).